Consider the following 413-residue polypeptide: Oxidoreductase vrtI (413 aa).

A Fe2OG dioxygenase domain is found at 235–341 (DAESLTTLSM…RYSIAYFLRA (107 aa)). Fe cation-binding residues include His-262, Asp-264, and His-319. Arg-332 provides a ligand contact to 2-oxoglutarate.

Belongs to the iron/ascorbate-dependent oxidoreductase family.

Its pathway is secondary metabolite biosynthesis; terpenoid biosynthesis. In terms of biological role, oxidoreductase; part of the gene cluster that mediates the biosynthesis of viridicatumtoxin, a tetracycline-like fungal meroterpenoid with a unique, fused spirobicyclic ring system. The first step of the pathway is the production of the malonamoyl-CoA starter unit for the polyketide synthase vrtA. The aldolase vrtJ may be involved in the synthesis of the malonamate substrate for malonamoyl-CoA synthetase vrtB. The polyketide synthase vrtA then may utilize the malonamoyl-CoA starter unit, followed by sequential condensation of eight malonyl-CoA units to form the polyketide backbone. The cyclization of the last ring could be mediated by the lactamase-like protein vrtG. The proposed post-PKS tailoring steps are a hydroxylation at C5 catalyzed the cytochrome P450 monooxygenase vrtE, a hydroxylation at C12a catalyzed by VrtH and/or VrtI, and an O-methylation by the O-methyltransferase vrtF. VrtC is then proposed to catalyze the transfer of a geranyl group synthesized by vrtD to the aromatic C ring of the tetracyclic polyketide intermediate of viridicatumtoxin to yield previridicatumtoxin. Finally, the cytochrome P450 monooxygenase vrtK catalyzes the spirocyclization of the geranyl moiety of previridicatumtoxin to afford viridicatumtoxin. The polypeptide is Oxidoreductase vrtI (Penicillium aethiopicum).